We begin with the raw amino-acid sequence, 311 residues long: Protoheme IX farnesyltransferase (311 aa).

The next 9 helical transmembrane spans lie at 32–52 (VMSL…VVVD), 53–73 (PLYG…AGAL), 98–118 (ISRG…VFLM), 120–140 (VLIN…YIVI), 153–173 (IVIG…AATG), 180–200 (FLLF…LCLF), 226–246 (ILVY…TGYA), 248–268 (IIYG…AYRL), and 285–305 (FFFS…EFLI).

This sequence belongs to the UbiA prenyltransferase family. Protoheme IX farnesyltransferase subfamily.

It is found in the cell inner membrane. It catalyses the reaction heme b + (2E,6E)-farnesyl diphosphate + H2O = Fe(II)-heme o + diphosphate. The protein operates within porphyrin-containing compound metabolism; heme O biosynthesis; heme O from protoheme: step 1/1. Functionally, converts heme B (protoheme IX) to heme O by substitution of the vinyl group on carbon 2 of heme B porphyrin ring with a hydroxyethyl farnesyl side group. In Bartonella bacilliformis (strain ATCC 35685 / KC583 / Herrer 020/F12,63), this protein is Protoheme IX farnesyltransferase.